We begin with the raw amino-acid sequence, 161 residues long: DNA-directed RNA polymerase 19 kDa subunit (161 aa).

Over residues 1–32 (MADTDDIIDYESDDLTEYEDDEEDGESLETSD) the composition is skewed to acidic residues. The disordered stretch occupies residues 1–35 (MADTDDIIDYESDDLTEYEDDEEDGESLETSDIDP).

It belongs to the poxviridae DNA-directed RNA polymerase 19 kDa subunit family. In terms of assembly, the DNA-dependent RNA polymerase used for intermediate and late genes expression consists of eight subunits Rpo30/OPG66, Rpo7/OPG90, Rpo22/OPG103, Rpo147/OPG105, Rpo18/OPG119, Rpo19/OPG131, Rpo132/OPG151 and Rpo35/OPG156. The same holoenzyme, with the addition of the transcription-specificity factor OPG109, is used for early gene expression.

It localises to the virion. The catalysed reaction is RNA(n) + a ribonucleoside 5'-triphosphate = RNA(n+1) + diphosphate. Part of the DNA-dependent RNA polymerase which catalyzes the transcription of viral DNA into RNA using the four ribonucleoside triphosphates as substrates. Responsible for the transcription of early, intermediate and late genes. DNA-dependent RNA polymerase associates with the early transcription factor (ETF), itself composed of OPG118 and OPG133, thereby allowing the early genes transcription. Late transcription, and probably also intermediate transcription, require newly synthesized RNA polymerase. The sequence is that of DNA-directed RNA polymerase 19 kDa subunit (OPG131) from Monkeypox virus.